We begin with the raw amino-acid sequence, 102 residues long: Large ribosomal subunit protein mL63 (102 aa).

It belongs to the mitochondrion-specific ribosomal protein mL63 family.

It localises to the mitochondrion. The protein is Large ribosomal subunit protein mL63 (Mrpl57) of Mus musculus (Mouse).